A 215-amino-acid chain; its full sequence is Adenylate kinase (215 aa).

10 to 15 (GAGKGT) lines the ATP pocket. Positions 30-59 (STGDMLRAAVKAETELGLKAKSVMDSGGLV) are NMP. AMP is bound by residues Thr-31, Arg-36, 57–59 (GLV), 85–88 (GFPR), and Gln-92. Residues 122-159 (GRRVHEGSGRIYHTIFNPPKVEGIDDVTGEPLLQRKDD) form an LID region. Residues Arg-123 and 132-133 (IY) each bind ATP. Residues Arg-156 and Arg-167 each coordinate AMP. Position 201 (Gly-201) interacts with ATP.

Belongs to the adenylate kinase family. In terms of assembly, monomer.

It is found in the cytoplasm. The catalysed reaction is AMP + ATP = 2 ADP. The protein operates within purine metabolism; AMP biosynthesis via salvage pathway; AMP from ADP: step 1/1. In terms of biological role, catalyzes the reversible transfer of the terminal phosphate group between ATP and AMP. Plays an important role in cellular energy homeostasis and in adenine nucleotide metabolism. This is Adenylate kinase from Pseudomonas syringae pv. syringae (strain B728a).